The sequence spans 682 residues: Potassium-transporting ATPase ATP-binding subunit (682 aa).

4 consecutive transmembrane segments (helical) span residues 34–54 (PVMF…IAMA), 62–82 (ALFS…ANFA), 219–239 (IALT…TATL), and 254–274 (VLVA…LSAI). Asp307 serves as the catalytic 4-aspartylphosphate intermediate. Residues Asp344, Glu348, 377–384 (FTAQSRMS), and Lys395 each bind ATP. Mg(2+)-binding residues include Asp518 and Asp522. Transmembrane regions (helical) follow at residues 588 to 608 (FAII…LNIM), 616 to 636 (AILS…PLAL), and 656 to 676 (IYGL…DLLL).

The protein belongs to the cation transport ATPase (P-type) (TC 3.A.3) family. Type IA subfamily. The system is composed of three essential subunits: KdpA, KdpB and KdpC.

Its subcellular location is the cell inner membrane. The catalysed reaction is K(+)(out) + ATP + H2O = K(+)(in) + ADP + phosphate + H(+). Part of the high-affinity ATP-driven potassium transport (or Kdp) system, which catalyzes the hydrolysis of ATP coupled with the electrogenic transport of potassium into the cytoplasm. This subunit is responsible for energy coupling to the transport system and for the release of the potassium ions to the cytoplasm. In Escherichia fergusonii (strain ATCC 35469 / DSM 13698 / CCUG 18766 / IAM 14443 / JCM 21226 / LMG 7866 / NBRC 102419 / NCTC 12128 / CDC 0568-73), this protein is Potassium-transporting ATPase ATP-binding subunit.